A 456-amino-acid chain; its full sequence is CBL-interacting protein kinase 16 (456 aa).

In terms of domain architecture, Protein kinase spans 22 to 277; the sequence is YELGRLLGQG…IPEIMRTPWF (256 aa). ATP is bound by residues 28 to 36 and Lys-51; that span reads LGQGTFAKV. Asp-145 (proton acceptor) is an active-site residue. The tract at residues 163–192 is activation loop; it reads DFGLAALPEQLRQDGLLHTQCGTPAYVAPE. An NAF domain is found at 309-335; the sequence is AMSPRTCNAFQLISSMSSGFDLSGMFE. A PPI region spans residues 339-368; the sequence is KAATVFTSRAPAATVIQKLEAVGRSLGYSA.

This sequence belongs to the protein kinase superfamily. CAMK Ser/Thr protein kinase family. SNF1 subfamily. Mn(2+) is required as a cofactor.

It carries out the reaction L-seryl-[protein] + ATP = O-phospho-L-seryl-[protein] + ADP + H(+). It catalyses the reaction L-threonyl-[protein] + ATP = O-phospho-L-threonyl-[protein] + ADP + H(+). Its function is as follows. CIPK serine-threonine protein kinases interact with CBL proteins. Binding of a CBL protein to the regulatory NAF domain of CIPK protein lead to the activation of the kinase in a calcium-dependent manner. The polypeptide is CBL-interacting protein kinase 16 (CIPK16) (Oryza sativa subsp. japonica (Rice)).